The primary structure comprises 116 residues: Ribonuclease P protein component (116 aa).

The protein belongs to the RnpA family. As to quaternary structure, consists of a catalytic RNA component (M1 or rnpB) and a protein subunit.

The enzyme catalyses Endonucleolytic cleavage of RNA, removing 5'-extranucleotides from tRNA precursor.. Functionally, RNaseP catalyzes the removal of the 5'-leader sequence from pre-tRNA to produce the mature 5'-terminus. It can also cleave other RNA substrates such as 4.5S RNA. The protein component plays an auxiliary but essential role in vivo by binding to the 5'-leader sequence and broadening the substrate specificity of the ribozyme. In Thermoanaerobacter pseudethanolicus (strain ATCC 33223 / 39E) (Clostridium thermohydrosulfuricum), this protein is Ribonuclease P protein component.